A 450-amino-acid chain; its full sequence is DNA primase DnaG (450 aa).

Residues 199-273 (DSIIVVEGRA…DVDYVARAPE (75 aa)) enclose the Toprim domain. Mg(2+)-binding residues include Glu205, Asp247, and Asp249. The segment covering 320 to 348 (APSKEVKPAPKHEPKPQPVEQKPREEKII) has biased composition (basic and acidic residues). A disordered region spans residues 320–350 (APSKEVKPAPKHEPKPQPVEQKPREEKIIRP).

The protein belongs to the archaeal DnaG primase family. In terms of assembly, forms a ternary complex with MCM helicase and DNA. Component of the archaeal exosome complex. The cofactor is Mg(2+).

It catalyses the reaction ssDNA + n NTP = ssDNA/pppN(pN)n-1 hybrid + (n-1) diphosphate.. RNA polymerase that catalyzes the synthesis of short RNA molecules used as primers for DNA polymerase during DNA replication. Also part of the exosome, which is a complex involved in RNA degradation. Acts as a poly(A)-binding protein that enhances the interaction between heteromeric, adenine-rich transcripts and the exosome. In Thermococcus gammatolerans (strain DSM 15229 / JCM 11827 / EJ3), this protein is DNA primase DnaG.